The following is a 341-amino-acid chain: Uroporphyrinogen decarboxylase (341 aa).

Substrate-binding positions include 23–27, Asp-73, Tyr-147, Ser-202, and His-318; that span reads RQAGR.

It belongs to the uroporphyrinogen decarboxylase family. In terms of assembly, homodimer.

Its subcellular location is the cytoplasm. It catalyses the reaction uroporphyrinogen III + 4 H(+) = coproporphyrinogen III + 4 CO2. It functions in the pathway porphyrin-containing compound metabolism; protoporphyrin-IX biosynthesis; coproporphyrinogen-III from 5-aminolevulinate: step 4/4. Its function is as follows. Catalyzes the decarboxylation of four acetate groups of uroporphyrinogen-III to yield coproporphyrinogen-III. The chain is Uroporphyrinogen decarboxylase from Erythrobacter litoralis (strain HTCC2594).